Here is a 485-residue protein sequence, read N- to C-terminus: Programmed cell death protein 7 (485 aa).

Residues 1–133 (MALPPFFGQG…EAPPPPADVL (133 aa)) are disordered. A compositionally biased stretch (pro residues) spans 12 to 48 (PGPPPPQPPPPAPFGCPPPPLPSPAFPPPLPQRPGPF). The segment covering 49–71 (PGASAPFLQPPLALQPRASAEAS) has biased composition (low complexity). Pro residues-rich tracts occupy residues 82 to 96 (PVPPPPLPPPPPQCR) and 109 to 130 (PPPPGPGPPWSPRWPEAPPPPA). 2 coiled-coil regions span residues 232–335 (VGEA…AAAR) and 362–411 (RSEL…ESKL).

Interacts with RBM40. Component of the U11/U12 snRNPs that are part of the U12-type spliceosome.

The protein localises to the nucleus. In terms of biological role, promotes apoptosis when overexpressed. The protein is Programmed cell death protein 7 (PDCD7) of Homo sapiens (Human).